A 266-amino-acid chain; its full sequence is Imidazole glycerol phosphate synthase subunit HisF (266 aa).

Catalysis depends on residues Asp-11 and Asp-130. The segment at 134-157 (RTPEEAARPGPDGAPRGEGWDVYS) is disordered.

This sequence belongs to the HisA/HisF family. As to quaternary structure, heterodimer of HisH and HisF.

It localises to the cytoplasm. The catalysed reaction is 5-[(5-phospho-1-deoxy-D-ribulos-1-ylimino)methylamino]-1-(5-phospho-beta-D-ribosyl)imidazole-4-carboxamide + L-glutamine = D-erythro-1-(imidazol-4-yl)glycerol 3-phosphate + 5-amino-1-(5-phospho-beta-D-ribosyl)imidazole-4-carboxamide + L-glutamate + H(+). Its pathway is amino-acid biosynthesis; L-histidine biosynthesis; L-histidine from 5-phospho-alpha-D-ribose 1-diphosphate: step 5/9. IGPS catalyzes the conversion of PRFAR and glutamine to IGP, AICAR and glutamate. The HisF subunit catalyzes the cyclization activity that produces IGP and AICAR from PRFAR using the ammonia provided by the HisH subunit. The protein is Imidazole glycerol phosphate synthase subunit HisF of Paracidovorax citrulli (strain AAC00-1) (Acidovorax citrulli).